A 325-amino-acid chain; its full sequence is Heme A synthase (325 aa).

Helical transmembrane passes span 6-26 (WLAV…FTRL), 88-108 (LVGR…FVVG), 116-136 (LRLC…WYMV), 155-175 (LFCA…PTVI), and 184-204 (LVGC…GLVA). Heme is bound at residue His246. 3 helical membrane passes run 248-268 (MSAF…FFYD), 275-295 (VFLV…TLLF), and 297-317 (IPID…GICV). His305 lines the heme pocket.

Belongs to the COX15/CtaA family. Type 2 subfamily. In terms of assembly, interacts with CtaB. It depends on heme b as a cofactor.

The protein resides in the cell membrane. It carries out the reaction Fe(II)-heme o + 2 A + H2O = Fe(II)-heme a + 2 AH2. Its pathway is porphyrin-containing compound metabolism; heme A biosynthesis; heme A from heme O: step 1/1. Its function is as follows. Catalyzes the conversion of heme O to heme A by two successive hydroxylations of the methyl group at C8. The first hydroxylation forms heme I, the second hydroxylation results in an unstable dihydroxymethyl group, which spontaneously dehydrates, resulting in the formyl group of heme A. The protein is Heme A synthase of Neorickettsia sennetsu (strain ATCC VR-367 / Miyayama) (Ehrlichia sennetsu).